Consider the following 432-residue polypeptide: Nuclear pore complex-interacting protein family member B8 (432 aa).

2 disordered regions span residues 260-280 (RMGR…NSLS) and 353-420 (SPLP…LRTR). Residues 270–280 (QQHSITDNSLS) are compositionally biased toward polar residues. A compositionally biased stretch (basic and acidic residues) spans 374-402 (EVEKPPKPKRWRVDEVEQSPKPKRQREAE). A compositionally biased stretch (basic residues) spans 408–420 (KPKRRRLSKLRTR).

It belongs to the NPIP family.

The polypeptide is Nuclear pore complex-interacting protein family member B8 (NPIPB8) (Homo sapiens (Human)).